A 960-amino-acid polypeptide reads, in one-letter code: Vacuolar membrane protease (960 aa).

The Cytoplasmic portion of the chain corresponds to 1-57 (MADNNSSSGSLVIDEQDYDVHEAGQQGQQGQQKHQQRQQERPSLITRVFRSVFGYRK). Positions 22 to 41 (EAGQQGQQGQQKHQQRQQER) are disordered. Low complexity predominate over residues 24–33 (GQQGQQGQQK). The chain crosses the membrane as a helical span at residues 58 to 78 (TSLSLFVVATIALCVSLSYID). Topologically, residues 79-401 (NSVDFISFPT…FTISTSQLFK (323 aa)) are vacuolar. A glycan (N-linked (GlcNAc...) asparagine) is linked at N148. The Zn(2+) site is built by H189 and D201. The active-site Proton acceptor is the E235. Zn(2+) is bound by residues E236, E261, and H333. A helical membrane pass occupies residues 402–422 (INVALLTVFPILNGLLLLYTI). The Cytoplasmic segment spans residues 423 to 432 (RSRKWQVSFS). Residues 433 to 453 (SAISIPVALLVTMFIVVYLVV) traverse the membrane as a helical segment. The Vacuolar segment spans residues 454 to 476 (ESYKSFNQYLPSSRPLLLVATIT). The helical transmembrane segment at 477–497 (SILLLVFSIILVAFSFFSIIA) threads the bilayer. Residues 498-502 (EENLR) lie on the Cytoplasmic side of the membrane. Residues 503–523 (LLAIVELSFAYWVGLAFTTHG) traverse the membrane as a helical segment. Residues 524 to 535 (LSGAESARHSGE) are Vacuolar-facing. The helical transmembrane segment at 536–556 (FAVSILFTLEAVASFLGLIGW) threads the bilayer. The Cytoplasmic segment spans residues 557–635 (SLCRNRSHLQ…FGYDWSLQYL (79 aa)). Residues 587-605 (NDHDHEHRHGHEDNEHGEA) show a composition bias toward basic and acidic residues. Residues 587 to 614 (NDHDHEHRHGHEDNEHGEAHVQQQSQSR) are disordered. Residues 636–656 (ITVPLSIFIIYNSGWLVLEGV) form a helical membrane-spanning segment. The N-linked (GlcNAc...) asparagine glycan is linked to N657. Residues 657–668 (NKTLQESAKAET) are Vacuolar-facing. The chain crosses the membrane as a helical span at residues 669–689 (FVYNLLWIVSVSLVLPLIPFA). Residues 690–696 (GKLNRYM) are Cytoplasmic-facing. A helical transmembrane segment spans residues 697 to 717 (VFVLIAIGVLGTLLVHVVQPF). At 718 to 960 (NEANPLKLRF…LVAYTKQVHV (243 aa)) the chain is on the vacuolar side. N736, N763, N803, N875, and N921 each carry an N-linked (GlcNAc...) asparagine glycan.

It belongs to the peptidase M28 family. The cofactor is Zn(2+).

Its subcellular location is the vacuole membrane. Its function is as follows. May be involved in vacuolar sorting and osmoregulation. In Lodderomyces elongisporus (strain ATCC 11503 / CBS 2605 / JCM 1781 / NBRC 1676 / NRRL YB-4239) (Yeast), this protein is Vacuolar membrane protease.